Here is a 257-residue protein sequence, read N- to C-terminus: tRNA (guanine-N(7)-)-methyltransferase (257 aa).

Residues 1-42 (MTVVVSDHQNPRPPGDDAAPLGRTGNRDRPPGSFFGRRKGHR) form a disordered region. Glu84, Glu109, Asp136, and Asp158 together coordinate S-adenosyl-L-methionine. The active site involves Asp158. Positions 162 and 194 each coordinate substrate.

This sequence belongs to the class I-like SAM-binding methyltransferase superfamily. TrmB family.

The catalysed reaction is guanosine(46) in tRNA + S-adenosyl-L-methionine = N(7)-methylguanosine(46) in tRNA + S-adenosyl-L-homocysteine. It functions in the pathway tRNA modification; N(7)-methylguanine-tRNA biosynthesis. In terms of biological role, catalyzes the formation of N(7)-methylguanine at position 46 (m7G46) in tRNA. The polypeptide is tRNA (guanine-N(7)-)-methyltransferase (Nitrobacter winogradskyi (strain ATCC 25391 / DSM 10237 / CIP 104748 / NCIMB 11846 / Nb-255)).